Here is a 182-residue protein sequence, read N- to C-terminus: ATP-dependent protease subunit HslV (182 aa).

Residue Thr10 is part of the active site. Positions 166, 169, and 172 each coordinate Na(+).

Belongs to the peptidase T1B family. HslV subfamily. As to quaternary structure, a double ring-shaped homohexamer of HslV is capped on each side by a ring-shaped HslU homohexamer. The assembly of the HslU/HslV complex is dependent on binding of ATP.

The protein localises to the cytoplasm. The enzyme catalyses ATP-dependent cleavage of peptide bonds with broad specificity.. Allosterically activated by HslU binding. Functionally, protease subunit of a proteasome-like degradation complex believed to be a general protein degrading machinery. The sequence is that of ATP-dependent protease subunit HslV from Rickettsia felis (strain ATCC VR-1525 / URRWXCal2) (Rickettsia azadi).